A 310-amino-acid polypeptide reads, in one-letter code: Nucleotide-binding protein BAD_0837 (310 aa).

31–38 (GMSGAGRS) lines the ATP pocket. Residue 82–85 (DVRS) participates in GTP binding.

It belongs to the RapZ-like family.

Functionally, displays ATPase and GTPase activities. The protein is Nucleotide-binding protein BAD_0837 of Bifidobacterium adolescentis (strain ATCC 15703 / DSM 20083 / NCTC 11814 / E194a).